The following is a 222-amino-acid chain: Phosphatidylinositol phosphate synthase (222 aa).

Position 31 to 34 (31 to 34 (DIVT)) interacts with a CDP-1,2-diacyl-sn-glycerol. Transmembrane regions (helical) follow at residues 32–49 (IVTL…LTLF) and 55–74 (WWGA…DGAM). Mg(2+)-binding residues include aspartate 68 and aspartate 71. The a CDP-1,2-diacyl-sn-glycerol site is built by glycine 72, arginine 76, and threonine 82. Residues aspartate 89 and aspartate 93 each coordinate Mg(2+). Aspartate 93 functions as the Proton acceptor in the catalytic mechanism. A run of 4 helical transmembrane segments spans residues 95 to 112 (LGDG…AFGL), 118 to 136 (VVAT…YIKA), 156 to 173 (LVIV…FFPL), and 179 to 196 (VAMW…LQRV).

The protein belongs to the CDP-alcohol phosphatidyltransferase class-I family. As to quaternary structure, homodimer. The cofactor is Mg(2+).

The protein localises to the cell membrane. Its subcellular location is the secreted. It localises to the cell wall. The enzyme catalyses a CDP-1,2-diacyl-sn-glycerol + 1D-myo-inositol 3-phosphate = a 1,2-diacyl-sn-glycero-3-phospho-(1D-myo-inositol-3-phosphate) + CMP + H(+). It carries out the reaction 1,2-di-(9Z-octadecenoyl)-sn-glycero-3-cytidine-5'-diphosphate + 1D-myo-inositol 3-phosphate = 1,2-di-(9Z-octadecenoyl)-sn-glycero-3-phospho-(1D-myo-inositol-3-phosphate) + CMP + H(+). It catalyses the reaction 1,2-dihexadecanoyl-sn-glycero-3-CDP + 1D-myo-inositol 3-phosphate = 1,2-dihexadecanoyl-sn-glycero-3-phospho-(1D-myo-inositol-3-phosphate) + CMP + H(+). The protein operates within phospholipid metabolism; phosphatidylinositol phosphate biosynthesis. Its activity is regulated as follows. Competitively inhibited by several inositol 1-phosphate analogs, including the phosphonate analog 1-deoxy-1-phosphonomethyl-myo-inositol (Ino-C-P). This leads to inhibition of M.smegmatis growth. Functionally, catalyzes the conjugation of the 1'-hydroxyl group of D-myo-inositol-3-phosphate (also named L-myo-inositol-1-phosphate) with a lipid tail of cytidine diphosphate diacylglycerol (CDP-DAG), forming phosphatidylinositol phosphate (PIP) and CMP. PIP is a precursor of phosphatidylinositol (PI) which is an essential lipid for mycobacteria required for formation of their cell wall. Is essential to the survival of M.smegmatis. This Mycolicibacterium smegmatis (strain ATCC 700084 / mc(2)155) (Mycobacterium smegmatis) protein is Phosphatidylinositol phosphate synthase.